A 921-amino-acid polypeptide reads, in one-letter code: Isoleucine--tRNA ligase (921 aa).

The short motif at 57–67 (PYANGELHMGH) is the 'HIGH' region element. E552 lines the L-isoleucyl-5'-AMP pocket. The short motif at 593–597 (KMSKS) is the 'KMSKS' region element. ATP is bound at residue K596. Zn(2+) is bound by residues C888, C891, C908, and C911.

It belongs to the class-I aminoacyl-tRNA synthetase family. IleS type 1 subfamily. As to quaternary structure, monomer. Zn(2+) is required as a cofactor.

It localises to the cytoplasm. It carries out the reaction tRNA(Ile) + L-isoleucine + ATP = L-isoleucyl-tRNA(Ile) + AMP + diphosphate. Functionally, catalyzes the attachment of isoleucine to tRNA(Ile). As IleRS can inadvertently accommodate and process structurally similar amino acids such as valine, to avoid such errors it has two additional distinct tRNA(Ile)-dependent editing activities. One activity is designated as 'pretransfer' editing and involves the hydrolysis of activated Val-AMP. The other activity is designated 'posttransfer' editing and involves deacylation of mischarged Val-tRNA(Ile). The chain is Isoleucine--tRNA ligase from Listeria monocytogenes serotype 4b (strain F2365).